A 657-amino-acid chain; its full sequence is Oleate activated transcription factor 3 (657 aa).

The segment at residues 21–48 is a DNA-binding region (zn(2)-C6 fungal-type); it reads CLNCRRRKTKCDRGKPSCSNCLKLGETC.

The protein belongs to the OAF3 family.

The protein resides in the cytoplasm. It is found in the nucleus. Its subcellular location is the mitochondrion. Its function is as follows. Transcriptional inhibitor with a significantly increased number of target genes in response to oleate. The protein is Oleate activated transcription factor 3 (OAF3) of Kluyveromyces lactis (strain ATCC 8585 / CBS 2359 / DSM 70799 / NBRC 1267 / NRRL Y-1140 / WM37) (Yeast).